The primary structure comprises 430 residues: Enolase (430 aa).

Residue Gln163 participates in (2R)-2-phosphoglycerate binding. Residue Glu205 is the Proton donor of the active site. Mg(2+) is bound by residues Asp242, Glu286, and Asp313. Residues Lys338, Arg367, Ser368, and Lys389 each contribute to the (2R)-2-phosphoglycerate site. Lys338 serves as the catalytic Proton acceptor.

Belongs to the enolase family. It depends on Mg(2+) as a cofactor.

It is found in the cytoplasm. It localises to the secreted. Its subcellular location is the cell surface. It carries out the reaction (2R)-2-phosphoglycerate = phosphoenolpyruvate + H2O. Its pathway is carbohydrate degradation; glycolysis; pyruvate from D-glyceraldehyde 3-phosphate: step 4/5. Functionally, catalyzes the reversible conversion of 2-phosphoglycerate (2-PG) into phosphoenolpyruvate (PEP). It is essential for the degradation of carbohydrates via glycolysis. This Geotalea daltonii (strain DSM 22248 / JCM 15807 / FRC-32) (Geobacter daltonii) protein is Enolase.